A 274-amino-acid polypeptide reads, in one-letter code: NH(3)-dependent NAD(+) synthetase (274 aa).

46–53 (GISGGQDS) is an ATP binding site. Asp-52 is a binding site for Mg(2+). Arg-140 is a binding site for deamido-NAD(+). Thr-160 contacts ATP. Glu-165 contributes to the Mg(2+) binding site. Lys-173 and Asp-180 together coordinate deamido-NAD(+). ATP contacts are provided by Lys-189 and Thr-211. Position 260–261 (260–261 (HK)) interacts with deamido-NAD(+).

The protein belongs to the NAD synthetase family. Homodimer.

It catalyses the reaction deamido-NAD(+) + NH4(+) + ATP = AMP + diphosphate + NAD(+) + H(+). It participates in cofactor biosynthesis; NAD(+) biosynthesis; NAD(+) from deamido-NAD(+) (ammonia route): step 1/1. Its function is as follows. Catalyzes the ATP-dependent amidation of deamido-NAD to form NAD. Uses ammonia as a nitrogen source. This is NH(3)-dependent NAD(+) synthetase from Streptococcus sanguinis (strain SK36).